The following is a 475-amino-acid chain: Methyltransferase-like protein 25B (475 aa).

The stretch at 186-210 (QRLVERAQRLDQELLQTLEKEEKRN) forms a coiled coil. A helical transmembrane segment spans residues 406-426 (VVAFFSLALLLAPLVETLILL).

The protein belongs to the METTL25 family.

It localises to the membrane. The polypeptide is Methyltransferase-like protein 25B (Bos taurus (Bovine)).